We begin with the raw amino-acid sequence, 207 residues long: Probable GTP-binding protein EngB (207 aa).

Residues G24–L199 form the EngB-type G domain. GTP-binding positions include G32–S39, G59–Q63, D77–G80, T144–D147, and Y178–G180. The Mg(2+) site is built by S39 and T61.

It belongs to the TRAFAC class TrmE-Era-EngA-EngB-Septin-like GTPase superfamily. EngB GTPase family. Requires Mg(2+) as cofactor.

Its function is as follows. Necessary for normal cell division and for the maintenance of normal septation. The polypeptide is Probable GTP-binding protein EngB (Xanthomonas euvesicatoria pv. vesicatoria (strain 85-10) (Xanthomonas campestris pv. vesicatoria)).